A 150-amino-acid chain; its full sequence is UPF0756 membrane protein ABAYE1440 (150 aa).

Transmembrane regions (helical) follow at residues 1–21, 45–65, 83–103, and 115–135; these read MLAQ…CGLL, FFPY…TIGV, FISF…WLGG, and VVAG…GVPV.

It belongs to the UPF0756 family.

It is found in the cell membrane. This chain is UPF0756 membrane protein ABAYE1440, found in Acinetobacter baumannii (strain AYE).